The chain runs to 246 residues: uncharacterized protein (246 aa).

The helical transmembrane segment at G7–F29 threads the bilayer.

It is found in the membrane. This is an uncharacterized protein from Treponema pallidum (strain Nichols).